A 419-amino-acid polypeptide reads, in one-letter code: UDP-N-acetylglucosamine 1-carboxyvinyltransferase (419 aa).

Residue 22–23 (KN) coordinates phosphoenolpyruvate. Position 93 (Arg-93) interacts with UDP-N-acetyl-alpha-D-glucosamine. Residue Cys-117 is the Proton donor of the active site. Cys-117 bears the 2-(S-cysteinyl)pyruvic acid O-phosphothioketal mark. Residues Asp-307 and Ile-329 each coordinate UDP-N-acetyl-alpha-D-glucosamine.

The protein belongs to the EPSP synthase family. MurA subfamily.

The protein localises to the cytoplasm. It catalyses the reaction phosphoenolpyruvate + UDP-N-acetyl-alpha-D-glucosamine = UDP-N-acetyl-3-O-(1-carboxyvinyl)-alpha-D-glucosamine + phosphate. The protein operates within cell wall biogenesis; peptidoglycan biosynthesis. Cell wall formation. Adds enolpyruvyl to UDP-N-acetylglucosamine. The protein is UDP-N-acetylglucosamine 1-carboxyvinyltransferase of Shewanella denitrificans (strain OS217 / ATCC BAA-1090 / DSM 15013).